A 649-amino-acid chain; its full sequence is FAS-associated factor 1 (649 aa).

In terms of domain architecture, UBA spans 1–57; sequence MASNMDREMILADFQACTGIENIDEAITLLEQNNWDLVAAINGVIPQENGILQSDFG. Positions 55 to 84 are disordered; sequence DFGGETMPGPTFDPASPPAPAPAPSSSAFR. Serine 319 is modified (phosphoserine). In terms of domain architecture, UBX spans 568 to 645; the sequence is NAEPVSKLRI…NLFPQETLFL (78 aa). Position 579 is a phosphothreonine (threonine 579). Serine 581 bears the Phosphoserine mark.

Interacts with CDT1 and ATPase VCP/p97. Interacts (via UBA domain) with FAS (via death domain). Interacts (via UBA domain) with NLRP12 (via DAPIN/PYRIN domain). As to expression, central nervous system.

Its subcellular location is the nucleus. In terms of biological role, ubiquitin-binding protein. Required for the progression of DNA replication forks by targeting DNA replication licensing factor CDT1 for degradation. Potentiates but cannot initiate FAS-induced apoptosis. This chain is FAS-associated factor 1 (Faf1), found in Rattus norvegicus (Rat).